Here is a 453-residue protein sequence, read N- to C-terminus: Sensor histidine kinase CpxA (453 aa).

At 1–4 (MTAR) the chain is on the cytoplasmic side. The helical transmembrane segment at 5–25 (IFAIFWLTLALVLMLVLMLPK) threads the bilayer. Residues 26–159 (LDSRQMTELL…SDFINLLFDR (134 aa)) are Periplasmic-facing. Residues 160-180 (PLLLLIVTMLVSAPLLLWLAW) form a helical membrane-spanning segment. Residues 180 to 233 (WSLAKPARKLKNAADEVAQGNLRQHPELEAGPQEFLAAGASFNQMVTALERMMT) enclose the HAMP domain. Over 181–453 (SLAKPARKLK…TIWLPLYKRT (273 aa)) the chain is Cytoplasmic. One can recognise a Histidine kinase domain in the interval 241-451 (DISHELRTPL…RLTIWLPLYK (211 aa)). The Nucleophile role is filled by histidine 244. Histidine 244 bears the Phosphohistidine; by autocatalysis mark. ATP-binding positions include 244 to 247 (HELR), 355 to 360 (RNALRY), aspartate 382, 401 to 402 (RT), and 412 to 417 (GTGLGL).

Interacts with cognate response regulator CpxR.

Its subcellular location is the cell inner membrane. It carries out the reaction ATP + protein L-histidine = ADP + protein N-phospho-L-histidine.. With respect to regulation, the two-component system is activated by envelope stress such as overexpression of some (misfolded) periplasmic proteins. Its function is as follows. Histidine kinase member of the two-component regulatory system CpxA/CpxR which responds to envelope stress response by activating or, in some cases, repressing expression of downstream genes. Activates CpxR by phosphorylation. This chain is Sensor histidine kinase CpxA, found in Klebsiella pneumoniae subsp. pneumoniae (strain HS11286).